The chain runs to 317 residues: Probable cell division protein WhiA (317 aa).

Positions 267–300 (SLKELGEMLHPPVGKSGVNHRLRRLELIARQVRG) form a DNA-binding region, H-T-H motif.

It belongs to the WhiA family.

In terms of biological role, involved in cell division and chromosome segregation. This Moorella thermoacetica (strain ATCC 39073 / JCM 9320) protein is Probable cell division protein WhiA.